Reading from the N-terminus, the 220-residue chain is MNILIFGPPGSGKSTQARRIVERYGLTYISSGDLIRKEIAEGTPLGREMQAYLARGDLIPDTIVNTLIISKLRRVRKDFIMDGYPRTPEQVIALENYLYDHGIKIDVAIDIYVSLEESIRRVSGRRICPKCGAVYHVEFNPPKIPGRCDVCGAELVQREDDRPEVVEKRYRIYMKNMEPIIKFYQKQRIYVKINGHGNIDEVWERIRPLLDYIRNREAMI.

10 to 15 (GSGKST) provides a ligand contact to ATP. The NMP stretch occupies residues 30–59 (SSGDLIRKEIAEGTPLGREMQAYLARGDLI). Residues serine 31, arginine 36, 57–59 (DLI), 83–86 (GYPR), and glutamine 90 each bind AMP. An LID region spans residues 124 to 161 (GRRICPKCGAVYHVEFNPPKIPGRCDVCGAELVQREDD). ATP is bound at residue arginine 125. Residues cysteine 128 and cysteine 131 each contribute to the Zn(2+) site. Position 134-135 (134-135 (VY)) interacts with ATP. Zn(2+)-binding residues include cysteine 148 and cysteine 151. AMP is bound by residues arginine 158 and arginine 169. ATP is bound at residue glycine 197.

Belongs to the adenylate kinase family. Monomer.

The protein resides in the cytoplasm. The catalysed reaction is AMP + ATP = 2 ADP. Its pathway is purine metabolism; AMP biosynthesis via salvage pathway; AMP from ADP: step 1/1. Its function is as follows. Catalyzes the reversible transfer of the terminal phosphate group between ATP and AMP. Plays an important role in cellular energy homeostasis and in adenine nucleotide metabolism. This chain is Adenylate kinase, found in Pyrococcus furiosus (strain ATCC 43587 / DSM 3638 / JCM 8422 / Vc1).